A 58-amino-acid polypeptide reads, in one-letter code: Large ribosomal subunit protein uL30 (58 aa).

Belongs to the universal ribosomal protein uL30 family. As to quaternary structure, part of the 50S ribosomal subunit.

The chain is Large ribosomal subunit protein uL30 from Phocaeicola vulgatus (strain ATCC 8482 / DSM 1447 / JCM 5826 / CCUG 4940 / NBRC 14291 / NCTC 11154) (Bacteroides vulgatus).